Here is a 222-residue protein sequence, read N- to C-terminus: 3-dehydroquinate dehydratase (222 aa).

3-dehydroquinate contacts are provided by residues 32-34 and Arg-64; that span reads ELR. His-117 (proton donor/acceptor) is an active-site residue. Catalysis depends on Lys-143, which acts as the Schiff-base intermediate with substrate. Residue Arg-181 coordinates 3-dehydroquinate.

It belongs to the type-I 3-dehydroquinase family. As to quaternary structure, homodimer.

It carries out the reaction 3-dehydroquinate = 3-dehydroshikimate + H2O. Its pathway is metabolic intermediate biosynthesis; chorismate biosynthesis; chorismate from D-erythrose 4-phosphate and phosphoenolpyruvate: step 3/7. Involved in the third step of the chorismate pathway, which leads to the biosynthesis of aromatic amino acids. Catalyzes the cis-dehydration of 3-dehydroquinate (DHQ) and introduces the first double bond of the aromatic ring to yield 3-dehydroshikimate. The protein is 3-dehydroquinate dehydratase of Aeropyrum pernix (strain ATCC 700893 / DSM 11879 / JCM 9820 / NBRC 100138 / K1).